Here is a 206-residue protein sequence, read N- to C-terminus: Macrophage immunometabolism regulator (206 aa).

The protein belongs to the UNC119-binding protein family. In terms of assembly, interacts with unc119 family proteins; interaction preferentially takes place when unc119 proteins are unliganded with myristoylated proteins.

The protein localises to the cytoplasm. Its subcellular location is the cell projection. It is found in the cilium. Its function is as follows. May play a role in immune regulation through regulation of the macrophage function. Involved in the recruitment of macrophages in response to injury. May also play a role in trafficking of proteins via its interaction with unc119 family cargo adapters. May play a role in ciliary membrane localization. Functionally, regulates the macrophage function, by enhancing the resolution of inflammation and wound repair functions mediated by M2 macrophages. The regulation of macrophage function is, due at least in part, to the role of C5orf30 in regulating ability to inhibit glycolysis. Probably plays alaso a role in trafficking of proteins via its interaction with UNC119 and UNC119B cargo adapters: may help the release of UNC119 and UNC119B cargo or the recycling of UNC119 and UNC119B. May play a role in ciliary membrane localization via its interaction with UNC119B and protein transport into photoreceptor cells. This Danio rerio (Zebrafish) protein is Macrophage immunometabolism regulator (macir).